We begin with the raw amino-acid sequence, 346 residues long: Nucleoplasmin-like protein ANO39 (346 aa).

An N-acetylserine modification is found at S2. An N-linked (GlcNAc...) asparagine glycan is attached at N85. The span at 123–141 (DEEELEEDDEEEEEEDEVE) shows a compositional bias: acidic residues. The segment at 123–285 (DEEELEEDDE…KAKAKTDTKL (163 aa)) is disordered. Residue S145 is modified to Phosphoserine; by CDC2. The span at 171 to 180 (AKLDKDADKK) shows a compositional bias: basic and acidic residues. A compositionally biased stretch (acidic residues) spans 181 to 247 (EDDDEEEDDE…EEEEDEDEES (67 aa)). N264 carries N-linked (GlcNAc...) asparagine glycosylation. Positions 271–285 (GDNKPKAKAKTDTKL) are enriched in basic and acidic residues.

The protein belongs to the nucleoplasmin family. In terms of processing, phosphorylation occurs in oocytes during the progression of the first meiotic M phase. No phosphorylation is observed in immature oocytes. As to expression, expressed specifically in the oocytes of the ovaries.

It is found in the nucleus. The protein localises to the nucleolus. It localises to the cytoplasm. Binds double-stranded RNA and both single-stranded and double-stranded DNA. This is Nucleoplasmin-like protein ANO39 from Patiria pectinifera (Starfish).